Here is a 486-residue protein sequence, read N- to C-terminus: ATP synthase subunit beta (486 aa).

171–178 (GGAGVGKT) contributes to the ATP binding site.

It belongs to the ATPase alpha/beta chains family. F-type ATPases have 2 components, CF(1) - the catalytic core - and CF(0) - the membrane proton channel. CF(1) has five subunits: alpha(3), beta(3), gamma(1), delta(1), epsilon(1). CF(0) has three main subunits: a(1), b(2) and c(9-12). The alpha and beta chains form an alternating ring which encloses part of the gamma chain. CF(1) is attached to CF(0) by a central stalk formed by the gamma and epsilon chains, while a peripheral stalk is formed by the delta and b chains.

The protein resides in the cell membrane. It catalyses the reaction ATP + H2O + 4 H(+)(in) = ADP + phosphate + 5 H(+)(out). Its function is as follows. Produces ATP from ADP in the presence of a proton gradient across the membrane. The catalytic sites are hosted primarily by the beta subunits. The sequence is that of ATP synthase subunit beta from Salinispora tropica (strain ATCC BAA-916 / DSM 44818 / JCM 13857 / NBRC 105044 / CNB-440).